Reading from the N-terminus, the 856-residue chain is Leucine--tRNA ligase (856 aa).

The short motif at 42–52 (PYPSGKLHMGH) is the 'HIGH' region element. Residues 615–619 (KMSKS) carry the 'KMSKS' region motif. K618 contacts ATP.

The protein belongs to the class-I aminoacyl-tRNA synthetase family.

Its subcellular location is the cytoplasm. The catalysed reaction is tRNA(Leu) + L-leucine + ATP = L-leucyl-tRNA(Leu) + AMP + diphosphate. In Chromohalobacter salexigens (strain ATCC BAA-138 / DSM 3043 / CIP 106854 / NCIMB 13768 / 1H11), this protein is Leucine--tRNA ligase.